An 86-amino-acid chain; its full sequence is Allergen Hum j 3 (86 aa).

The protein is Allergen Hum j 3 of Humulus japonicus (Japanese hop).